The following is a 415-amino-acid chain: Gamma-glutamyl phosphate reductase (415 aa).

It belongs to the gamma-glutamyl phosphate reductase family.

The protein resides in the cytoplasm. It catalyses the reaction L-glutamate 5-semialdehyde + phosphate + NADP(+) = L-glutamyl 5-phosphate + NADPH + H(+). It participates in amino-acid biosynthesis; L-proline biosynthesis; L-glutamate 5-semialdehyde from L-glutamate: step 2/2. Its function is as follows. Catalyzes the NADPH-dependent reduction of L-glutamate 5-phosphate into L-glutamate 5-semialdehyde and phosphate. The product spontaneously undergoes cyclization to form 1-pyrroline-5-carboxylate. The protein is Gamma-glutamyl phosphate reductase of Carboxydothermus hydrogenoformans (strain ATCC BAA-161 / DSM 6008 / Z-2901).